The chain runs to 257 residues: AN1-type zinc finger protein 2B (257 aa).

2 consecutive AN1-type zinc fingers follow at residues 4-52 (PDLG…QKDI) and 94-142 (KIFT…HQTS). Zn(2+)-binding residues include C10, C15, C25, C28, C33, H36, H42, C44, C100, C105, C115, C118, C123, H126, H132, and C134. A VCP/p97-interacting motif (VIM) region spans residues 141 to 151 (TSRAGLAAISR). The interval 152-184 (AQGLASTSTAPSPSRTLPSSSSPSRATPQLPTR) is disordered. Over residues 155-179 (LASTSTAPSPSRTLPSSSSPSRATP) the composition is skewed to low complexity. S163, S173, and S187 each carry phosphoserine; by MAPK14. UIM domains are found at residues 197-216 (SEDE…AKPQ) and 221-240 (QEED…AEYQ). At C254 the chain carries Cysteine methyl ester. The S-geranylgeranyl cysteine moiety is linked to residue C254. The CAAX motif signature appears at 254–257 (CSLC). Residues 255–257 (SLC) constitute a propeptide, removed in mature form.

As to quaternary structure, binds 'Lys-48'-linked polyubiquitin chains of ubiquitinated proteins. Associates with the proteasome complex; upon exposure to arsenite. Interacts (via VIM motif) with VCP; the interaction is direct. Interacts with BAG6. Interacts with IGF1R (nascent precursor form). Interacts with DERL1, FAF2, NPLOC4 and UFD1; probably through VCP. In terms of processing, phosphorylated by MAPK14. Phosphorylation has no effect on association with the proteasome complex.

It localises to the endoplasmic reticulum membrane. Its function is as follows. Plays a role in protein homeostasis by regulating both the translocation and the ubiquitin-mediated proteasomal degradation of nascent proteins at the endoplasmic reticulum. It is involved in the regulation of signal-mediated translocation of proteins into the endoplasmic reticulum. It also plays a role in the ubiquitin-mediated proteasomal degradation of proteins for which signal-mediated translocation to the endoplasmic reticulum has failed. May therefore function in the endoplasmic reticulum stress-induced pre-emptive quality control, a mechanism that selectively attenuates the translocation of newly synthesized proteins into the endoplasmic reticulum and reroutes them to the cytosol for proteasomal degradation. By controlling the steady-state expression of the IGF1R receptor, indirectly regulates the insulin-like growth factor receptor signaling pathway. The polypeptide is AN1-type zinc finger protein 2B (Mus musculus (Mouse)).